Here is a 200-residue protein sequence, read N- to C-terminus: Large ribosomal subunit protein uL13 (200 aa).

It belongs to the universal ribosomal protein uL13 family. In terms of assembly, component of the large ribosomal subunit. Mature ribosomes consist of a small (40S) and a large (60S) subunit. The 40S subunit contains about 32 different proteins and 1 molecule of RNA (18S). The 60S subunit contains 45 different proteins and 3 molecules of RNA (25S, 5.8S and 5S).

The protein localises to the cytoplasm. In terms of biological role, component of the ribosome, a large ribonucleoprotein complex responsible for the synthesis of proteins in the cell. The small ribosomal subunit (SSU) binds messenger RNAs (mRNAs) and translates the encoded message by selecting cognate aminoacyl-transfer RNA (tRNA) molecules. The large subunit (LSU) contains the ribosomal catalytic site termed the peptidyl transferase center (PTC), which catalyzes the formation of peptide bonds, thereby polymerizing the amino acids delivered by tRNAs into a polypeptide chain. The nascent polypeptides leave the ribosome through a tunnel in the LSU and interact with protein factors that function in enzymatic processing, targeting, and the membrane insertion of nascent chains at the exit of the ribosomal tunnel. In Candida albicans (strain SC5314 / ATCC MYA-2876) (Yeast), this protein is Large ribosomal subunit protein uL13.